A 152-amino-acid polypeptide reads, in one-letter code: Ribosome maturation factor RimP (152 aa).

The protein belongs to the RimP family.

The protein localises to the cytoplasm. Its function is as follows. Required for maturation of 30S ribosomal subunits. This Desulfitobacterium hafniense (strain DSM 10664 / DCB-2) protein is Ribosome maturation factor RimP.